A 252-amino-acid polypeptide reads, in one-letter code: NADP-dependent (R)-specific alcohol dehydrogenase (252 aa).

Residues 16–19, 39–40, 63–64, Asn-90, Tyr-156, Lys-160, and 191–195 contribute to the NADP(+) site; these read TLGI, RH, DA, and IKTPL. Catalysis depends on Tyr-156, which acts as the Proton donor/acceptor. Gln-252 contacts Mg(2+).

It belongs to the short-chain dehydrogenases/reductases (SDR) family. As to quaternary structure, homotetramer. The cofactor is Mg(2+).

It carries out the reaction a secondary alcohol + NADP(+) = a ketone + NADPH + H(+). The enzyme catalyses acetophenone + NADPH + H(+) = (R)-1-phenylethanol + NADP(+). It catalyses the reaction 2,5-hexanedione + 2 NADPH + 2 H(+) = (2R,5R)-hexanediol + 2 NADP(+). The catalysed reaction is ethyl 3-oxobutanoate + NADPH + H(+) = ethyl (R)-3-hydroxybutanoate + NADP(+). It carries out the reaction 2-octanone + NADPH + H(+) = (2R)-octan-2-ol + NADP(+). In terms of biological role, NADP-dependent (R)-specific alcohol dehydrogenase (ADH) with a broad substrate specificity, able to catalyze in vitro the stereoselective reduction of several aliphatic and aromatic ketones as well as beta-keto esters to the corresponding enantiomerically pure alcohols. The sequence is that of NADP-dependent (R)-specific alcohol dehydrogenase from Lentilactobacillus kefiri (Lactobacillus kefiri).